Reading from the N-terminus, the 141-residue chain is Regulator of ribonuclease activity B (141 aa).

A compositionally biased stretch (acidic residues) spans Asp119–Asp132. The disordered stretch occupies residues Asp119–His141.

Belongs to the RraB family. Interacts with the C-terminal region of Rne.

It is found in the cytoplasm. Functionally, globally modulates RNA abundance by binding to RNase E (Rne) and regulating its endonucleolytic activity. Can modulate Rne action in a substrate-dependent manner by altering the composition of the degradosome. In Shewanella amazonensis (strain ATCC BAA-1098 / SB2B), this protein is Regulator of ribonuclease activity B.